The sequence spans 130 residues: S-adenosylmethionine decarboxylase proenzyme (130 aa).

Catalysis depends on Ser64, which acts as the Schiff-base intermediate with substrate; via pyruvic acid. The residue at position 64 (Ser64) is a Pyruvic acid (Ser); by autocatalysis. His69 functions as the Proton acceptor; for processing activity in the catalytic mechanism. The active-site Proton donor; for catalytic activity is the Cys84.

It belongs to the prokaryotic AdoMetDC family. Type 1 subfamily. As to quaternary structure, heterotetramer of two alpha and two beta chains arranged as a dimer of alpha/beta heterodimers. Requires pyruvate as cofactor. Post-translationally, is synthesized initially as an inactive proenzyme. Formation of the active enzyme involves a self-maturation process in which the active site pyruvoyl group is generated from an internal serine residue via an autocatalytic post-translational modification. Two non-identical subunits are generated from the proenzyme in this reaction, and the pyruvate is formed at the N-terminus of the alpha chain, which is derived from the carboxyl end of the proenzyme. The post-translation cleavage follows an unusual pathway, termed non-hydrolytic serinolysis, in which the side chain hydroxyl group of the serine supplies its oxygen atom to form the C-terminus of the beta chain, while the remainder of the serine residue undergoes an oxidative deamination to produce ammonia and the pyruvoyl group blocking the N-terminus of the alpha chain.

The catalysed reaction is S-adenosyl-L-methionine + H(+) = S-adenosyl 3-(methylsulfanyl)propylamine + CO2. Its pathway is amine and polyamine biosynthesis; S-adenosylmethioninamine biosynthesis; S-adenosylmethioninamine from S-adenosyl-L-methionine: step 1/1. Its function is as follows. Catalyzes the decarboxylation of S-adenosylmethionine to S-adenosylmethioninamine (dcAdoMet), the propylamine donor required for the synthesis of the polyamines spermine and spermidine from the diamine putrescine. This is S-adenosylmethionine decarboxylase proenzyme from Thermoplasma volcanium (strain ATCC 51530 / DSM 4299 / JCM 9571 / NBRC 15438 / GSS1).